A 711-amino-acid chain; its full sequence is Interferon-induced GTP-binding protein Mx2 (711 aa).

The Dynamin-type G domain maps to 115–387 (DLALPAIAVI…LILHINKSLP (273 aa)). Positions 125–132 (GDQSSGKS) are G1 motif. 125 to 132 (GDQSSGKS) is a binding site for GTP. Residues 150-152 (VTR) form a G2 motif region. Positions 225–228 (DLPG) are G3 motif. Residues 225–229 (DLPGI) and 294–297 (TKPD) contribute to the GTP site. A G4 motif region spans residues 294–297 (TKPD). Positions 326–329 (RCRG) are G5 motif. In terms of domain architecture, GED spans 623-711 (NDEIGVHLNA…ARRALYMFFS (89 aa)).

This sequence belongs to the TRAFAC class dynamin-like GTPase superfamily. Dynamin/Fzo/YdjA family.

Its subcellular location is the cytoplasm. The protein localises to the nucleus. Functionally, interferon-induced dynamin-like GTPase with antiviral activity against vesicular stomatitis virus (VSV). This chain is Interferon-induced GTP-binding protein Mx2 (MX2), found in Canis lupus familiaris (Dog).